The following is a 183-amino-acid chain: Ankyrin repeat domain-containing protein 39 (183 aa).

ANK repeat units lie at residues 30 to 59 (DFERGIWSAALNGDLGRVKHLIQKAEDPSQ), 63 to 92 (AGYTALHYASRNGHYAVCQFLLESGAKCDA), 96 to 125 (GGATALHRASYCGHTEIARLLLSHGSNPRV), and 129 to 158 (DGMTSLHKAAERGHGDICSLLLQHSPALKA). Phosphoserine is present on S153.

This sequence belongs to the ANKRD39 family.

The chain is Ankyrin repeat domain-containing protein 39 (ANKRD39) from Homo sapiens (Human).